Here is a 160-residue protein sequence, read N- to C-terminus: MADIRQNIDKKANRRGAARLAAVQALYQMEIGGAGINDVFAEFESHWLGSEVEGDKYLPAEAAFFRDVVAGVVRDQARLDPLIDDALSRGWPLKRIDAILRAVLRAGSYELEHRKDVPARVVVSEYVDVAHAFIEKEEVGMVNAVLDQIARRFRAGEFAR.

The protein belongs to the NusB family.

In terms of biological role, involved in transcription antitermination. Required for transcription of ribosomal RNA (rRNA) genes. Binds specifically to the boxA antiterminator sequence of the ribosomal RNA (rrn) operons. This Nitrobacter hamburgensis (strain DSM 10229 / NCIMB 13809 / X14) protein is Transcription antitermination protein NusB.